Reading from the N-terminus, the 244-residue chain is Small ribosomal subunit protein uS2 (244 aa).

This sequence belongs to the universal ribosomal protein uS2 family.

The chain is Small ribosomal subunit protein uS2 from Halalkalibacterium halodurans (strain ATCC BAA-125 / DSM 18197 / FERM 7344 / JCM 9153 / C-125) (Bacillus halodurans).